A 284-amino-acid chain; its full sequence is Tropomyosin (284 aa).

Residues 1–284 (MDAIKKKMQA…DMTFTELIGN (284 aa)) are a coiled coil.

It belongs to the tropomyosin family. As to quaternary structure, homodimer.

Functionally, tropomyosin, in association with the troponin complex, plays a central role in the calcium dependent regulation of muscle contraction. This Blattella germanica (German cockroach) protein is Tropomyosin.